Here is a 199-residue protein sequence, read N- to C-terminus: Probable GTP-binding protein EngB (199 aa).

Residues 21–196 enclose the EngB-type G domain; sequence TKPEYAFIGR…LTYIDEINKQ (176 aa). GTP contacts are provided by residues 29 to 36, 56 to 60, 74 to 77, 141 to 144, and 175 to 177; these read GRSNVGKS, GKTQL, DLPG, TKID, and TSS. Mg(2+)-binding residues include serine 36 and threonine 58.

The protein belongs to the TRAFAC class TrmE-Era-EngA-EngB-Septin-like GTPase superfamily. EngB GTPase family. Requires Mg(2+) as cofactor.

Necessary for normal cell division and for the maintenance of normal septation. The protein is Probable GTP-binding protein EngB of Cytophaga hutchinsonii (strain ATCC 33406 / DSM 1761 / CIP 103989 / NBRC 15051 / NCIMB 9469 / D465).